The sequence spans 189 residues: Inner membrane-spanning protein YciB (189 aa).

Helical transmembrane passes span 3–23 (LLID…WGIY), 47–67 (IEPM…ATLL), 76–96 (WKPT…QLFF), 121–141 (WSWT…AHAF), and 149–169 (FKLF…ALYL).

It belongs to the YciB family.

The protein localises to the cell inner membrane. Its function is as follows. Plays a role in cell envelope biogenesis, maintenance of cell envelope integrity and membrane homeostasis. The protein is Inner membrane-spanning protein YciB of Paracidovorax citrulli (strain AAC00-1) (Acidovorax citrulli).